The following is a 601-amino-acid chain: Cdc42-interacting protein 4 (601 aa).

Residues 1-117 (MDWGTELWDQ…EMKQERKMHF (117 aa)) are required for podosome formation and interaction with AKAP9 and microtubules. Positions 1-117 (MDWGTELWDQ…EMKQERKMHF (117 aa)) are required for translocation to the plasma membrane in response to insulin. In terms of domain architecture, F-BAR spans 1–264 (MDWGTELWDQ…AANAVDPKND (264 aa)). A coiled-coil region spans residues 67 to 259 (FSQQQSFVQI…EGMKVAANAV (193 aa)). Disordered stretches follow at residues 280–358 (GDVE…GRDP), 390–420 (DFSH…EVDQ), and 479–543 (RGDS…SPIG). Residues 289–302 (QPMNRAPSDSSLGT) are compositionally biased toward polar residues. The tract at residues 293–537 (RAPSDSSLGT…TEFDEDFEEE (245 aa)) is interaction with CDC42. Positions 293–601 (RAPSDSSLGT…PTSYLRVTLN (309 aa)) are interaction with PDE6G. Residues S296, S298, and S299 each carry the phosphoserine modification. Basic residues predominate over residues 314 to 329 (GRSRTKRWPFGKKNKP). S335 is subject to Phosphoserine. The span at 336–346 (PLGGPVPSALP) shows a compositional bias: low complexity. S351 carries the post-translational modification Phosphoserine. The stretch at 388–481 (TEDFSHLPPE…ESRVLSNRGD (94 aa)) forms a coiled coil. The REM-1 domain maps to 393-470 (HLPPEQQRKR…VQKYEAWLAE (78 aa)). The span at 407 to 420 (LEERSRELQKEVDQ) shows a compositional bias: basic and acidic residues. Residues 471-601 (AESRVLSNRG…PTSYLRVTLN (131 aa)) are required for interaction with FASLG and localization to lysosomes. S482 carries the post-translational modification Phosphoserine. Residues 487 to 541 (ARPPDPPASAPPDSSSNSASQDTKESSEEPPSEESQDTPIYTEFDEDFEEEPTSP) are interaction with DNM2 and WASL. Low complexity predominate over residues 497–506 (PPDSSSNSAS). The segment covering 529–538 (EFDEDFEEEP) has biased composition (acidic residues). The segment at 529–601 (EFDEDFEEEP…PTSYLRVTLN (73 aa)) is interaction with DNM1 and WASL. Residues 538–601 (PTSPIGHCVA…PTSYLRVTLN (64 aa)) are required for podosome formation. The SH3 domain maps to 540–601 (SPIGHCVAIY…PTSYLRVTLN (62 aa)). The interaction with WAS stretch occupies residues 544-601 (HCVAIYHFEGSSEGTISMAEGEDLSLMEEDKGDGWTRVRRKEGGEGYVPTSYLRVTLN). The interaction with ARHGAP17, DAAM1, DIAPH1 and DIAPH2 stretch occupies residues 546–601 (VAIYHFEGSSEGTISMAEGEDLSLMEEDKGDGWTRVRRKEGGEGYVPTSYLRVTLN).

The protein belongs to the FNBP1 family. As to quaternary structure, interacts specifically with GTP-bound RHOQ. Interacts with DNM2 and PDE6G. Homodimerizes, the dimers can polymerize end-to-end to form filamentous structures. Interacts specifically with GTP-bound CDC42. Interacts with AKAP9, ARHGAP17, DAAM1, DIAPH1, DIAPH2, DNM1, FASLG/FASL, GAPVD1, LYN, microtubules, SRC, WAS/WASP and WASL/N-WASP. Interacts with the ligand binding domain of the thyroid receptor (TR) in the presence of thyroid hormone. May interact with CTNNB1 and HD/HTT. Post-translationally, tyrosine phosphorylated. Also phosphorylated by PKA. As to expression, expressed in brain, colon, heart, kidney, liver, lung, megakaryocyte, ovary, pancreas, peripheral blood lymphocytes, placenta, prostate, skeletal muscle, small intestine, spleen, testis, thymus and trachea.

The protein resides in the cytoplasm. Its subcellular location is the cytoskeleton. It is found in the cell cortex. The protein localises to the lysosome. It localises to the golgi apparatus. The protein resides in the cell membrane. Its subcellular location is the cell projection. It is found in the phagocytic cup. The protein localises to the perinuclear region. Required for translocation of GLUT4 to the plasma membrane in response to insulin signaling. Required to coordinate membrane tubulation with reorganization of the actin cytoskeleton during endocytosis. Binds to lipids such as phosphatidylinositol 4,5-bisphosphate and phosphatidylserine and promotes membrane invagination and the formation of tubules. Also promotes CDC42-induced actin polymerization by recruiting WASL/N-WASP which in turn activates the Arp2/3 complex. Actin polymerization may promote the fission of membrane tubules to form endocytic vesicles. Required for the formation of podosomes, actin-rich adhesion structures specific to monocyte-derived cells. May be required for the lysosomal retention of FASLG/FASL. In Homo sapiens (Human), this protein is Cdc42-interacting protein 4 (TRIP10).